The chain runs to 348 residues: tRNA N6-adenosine threonylcarbamoyltransferase (348 aa).

Positions 115 and 119 each coordinate Fe cation. Residues 138–142, Asp171, Gly184, and Asn276 contribute to the substrate site; that span reads LVSGG. Asp304 provides a ligand contact to Fe cation.

The protein belongs to the KAE1 / TsaD family. Requires Fe(2+) as cofactor.

Its subcellular location is the cytoplasm. It catalyses the reaction L-threonylcarbamoyladenylate + adenosine(37) in tRNA = N(6)-L-threonylcarbamoyladenosine(37) in tRNA + AMP + H(+). Required for the formation of a threonylcarbamoyl group on adenosine at position 37 (t(6)A37) in tRNAs that read codons beginning with adenine. Is involved in the transfer of the threonylcarbamoyl moiety of threonylcarbamoyl-AMP (TC-AMP) to the N6 group of A37, together with TsaE and TsaB. TsaD likely plays a direct catalytic role in this reaction. The sequence is that of tRNA N6-adenosine threonylcarbamoyltransferase from Xylella fastidiosa (strain M23).